A 103-amino-acid polypeptide reads, in one-letter code: Photosystem II 5 kDa protein, chloroplastic (103 aa).

Residues 1–75 constitute a chloroplast transit peptide; the sequence is MASMTMTATF…LAKVAMAEEE (75 aa).

Post-translationally, the maturation of the PSII-T precursor to its final form occurs through a two step process. First, a stromal intermediate is formed, which, upon translocation into the thylakoid membrane, is processed to the mature protein.

The protein resides in the plastid. Its subcellular location is the chloroplast thylakoid membrane. Its function is as follows. May be a component of the oxygen-evolving complex. The polypeptide is Photosystem II 5 kDa protein, chloroplastic (PSBT) (Arabidopsis thaliana (Mouse-ear cress)).